The chain runs to 1010 residues: Trifunctional purine biosynthetic protein adenosine-3 (1010 aa).

Ala-2 bears the N-acetylalanine mark. Ser-10 bears the Phosphoserine mark. The 208-residue stretch at 111 to 318 (KEFMDRHGIP…LYEVIQSTLD (208 aa)) folds into the ATP-grasp domain. Residues 190–193 (EELL), Glu-197, Arg-220, and Asn-229 each bind ATP. Mg(2+) is bound by residues Glu-288 and Asn-290. Lys-350 carries the N6-acetyllysine modification. The AIRS domain stretch occupies residues 434–809 (SLTYKESGVD…HFSFEKKKAR (376 aa)). At Ser-440 the chain carries Phosphoserine. Thr-682 carries the phosphothreonine modification. Ser-796 and Ser-802 each carry phosphoserine. The tract at residues 810–1010 (VAVLISGTGS…NGKICWVKEE (201 aa)) is GART domain. Residue 818-820 (GSN) coordinates N(1)-(5-phospho-beta-D-ribosyl)glycinamide. (6R)-10-formyltetrahydrofolate contacts are provided by residues Arg-871, 896 to 899 (MRIL), and Asn-913. His-915 acts as the Proton donor in catalysis. (6R)-10-formyltetrahydrofolate is bound at residue 947 to 951 (AEDVD). Position 977 to 980 (977 to 980 (KLAE)) interacts with N(1)-(5-phospho-beta-D-ribosyl)glycinamide.

In the N-terminal section; belongs to the GARS family. It in the central section; belongs to the AIR synthase family. This sequence in the C-terminal section; belongs to the GART family. Homodimer. It depends on Mg(2+) as a cofactor. The cofactor is Mn(2+).

It carries out the reaction 5-phospho-beta-D-ribosylamine + glycine + ATP = N(1)-(5-phospho-beta-D-ribosyl)glycinamide + ADP + phosphate + H(+). The catalysed reaction is N(1)-(5-phospho-beta-D-ribosyl)glycinamide + (6R)-10-formyltetrahydrofolate = N(2)-formyl-N(1)-(5-phospho-beta-D-ribosyl)glycinamide + (6S)-5,6,7,8-tetrahydrofolate + H(+). It catalyses the reaction 2-formamido-N(1)-(5-O-phospho-beta-D-ribosyl)acetamidine + ATP = 5-amino-1-(5-phospho-beta-D-ribosyl)imidazole + ADP + phosphate + H(+). The protein operates within purine metabolism; IMP biosynthesis via de novo pathway; 5-amino-1-(5-phospho-D-ribosyl)imidazole from N(2)-formyl-N(1)-(5-phospho-D-ribosyl)glycinamide: step 2/2. Its pathway is purine metabolism; IMP biosynthesis via de novo pathway; N(1)-(5-phospho-D-ribosyl)glycinamide from 5-phospho-alpha-D-ribose 1-diphosphate: step 2/2. It participates in purine metabolism; IMP biosynthesis via de novo pathway; N(2)-formyl-N(1)-(5-phospho-D-ribosyl)glycinamide from N(1)-(5-phospho-D-ribosyl)glycinamide (10-formyl THF route): step 1/1. Trifunctional enzyme that catalyzes three distinct reactions as part of the 'de novo' inosine monophosphate biosynthetic pathway. The polypeptide is Trifunctional purine biosynthetic protein adenosine-3 (GART) (Homo sapiens (Human)).